Reading from the N-terminus, the 105-residue chain is Small ribosomal subunit protein uS10 (105 aa).

It belongs to the universal ribosomal protein uS10 family. In terms of assembly, part of the 30S ribosomal subunit.

Functionally, involved in the binding of tRNA to the ribosomes. The sequence is that of Small ribosomal subunit protein uS10 from Desulfovibrio desulfuricans (strain ATCC 27774 / DSM 6949 / MB).